Here is a 162-residue protein sequence, read N- to C-terminus: Putative ankyrin repeat protein R664 (162 aa).

ANK repeat units lie at residues 10-40 (KKLV…NVNY), 47-78 (NDTP…DVNY), and 82-111 (YHET…NPYL).

In Acanthamoeba polyphaga mimivirus (APMV), this protein is Putative ankyrin repeat protein R664.